Here is a 312-residue protein sequence, read N- to C-terminus: DNA-directed RNA polymerase subunit alpha (312 aa).

The segment at 1–226 (MIEFEKPNIT…EHLDLFTDLT (226 aa)) is alpha N-terminal domain (alpha-NTD). Residues 244 to 312 (DHVLERTIEE…DLGLGLKNDK (69 aa)) are alpha C-terminal domain (alpha-CTD).

It belongs to the RNA polymerase alpha chain family. As to quaternary structure, homodimer. The RNAP catalytic core consists of 2 alpha, 1 beta, 1 beta' and 1 omega subunit. When a sigma factor is associated with the core the holoenzyme is formed, which can initiate transcription.

The catalysed reaction is RNA(n) + a ribonucleoside 5'-triphosphate = RNA(n+1) + diphosphate. In terms of biological role, DNA-dependent RNA polymerase catalyzes the transcription of DNA into RNA using the four ribonucleoside triphosphates as substrates. In Streptococcus gordonii (strain Challis / ATCC 35105 / BCRC 15272 / CH1 / DL1 / V288), this protein is DNA-directed RNA polymerase subunit alpha.